A 211-amino-acid polypeptide reads, in one-letter code: Thymidine kinase (211 aa).

ATP-binding positions include 9–16 (STMNAGKS) and 87–90 (DEAQ). Catalysis depends on glutamate 88, which acts as the Proton acceptor. Residues cysteine 145, cysteine 147, cysteine 182, and histidine 185 each coordinate Zn(2+).

This sequence belongs to the thymidine kinase family. In terms of assembly, homotetramer.

Its subcellular location is the cytoplasm. The catalysed reaction is thymidine + ATP = dTMP + ADP + H(+). This Rhodopirellula baltica (strain DSM 10527 / NCIMB 13988 / SH1) protein is Thymidine kinase.